A 544-amino-acid polypeptide reads, in one-letter code: Chaperonin GroEL 3 (544 aa).

ATP contacts are provided by residues 30 to 33 (TLGP), Lys51, 87 to 91 (DGTTT), Gly415, and Asp495.

It belongs to the chaperonin (HSP60) family. Forms a cylinder of 14 subunits composed of two heptameric rings stacked back-to-back. Interacts with the co-chaperonin GroES.

It localises to the cytoplasm. The catalysed reaction is ATP + H2O + a folded polypeptide = ADP + phosphate + an unfolded polypeptide.. In terms of biological role, together with its co-chaperonin GroES, plays an essential role in assisting protein folding. The GroEL-GroES system forms a nano-cage that allows encapsulation of the non-native substrate proteins and provides a physical environment optimized to promote and accelerate protein folding. The protein is Chaperonin GroEL 3 of Psychromonas ingrahamii (strain DSM 17664 / CCUG 51855 / 37).